Reading from the N-terminus, the 171-residue chain is Probable chemoreceptor glutamine deamidase CheD 1 (171 aa).

Over residues 1–18 (MTRTTGAAPDRAAPAAGE) the composition is skewed to low complexity. A disordered region spans residues 1–23 (MTRTTGAAPDRAAPAAGETPGGG).

The protein belongs to the CheD family.

It catalyses the reaction L-glutaminyl-[protein] + H2O = L-glutamyl-[protein] + NH4(+). Functionally, probably deamidates glutamine residues to glutamate on methyl-accepting chemotaxis receptors (MCPs), playing an important role in chemotaxis. The sequence is that of Probable chemoreceptor glutamine deamidase CheD 1 from Anaeromyxobacter dehalogenans (strain 2CP-C).